The following is a 100-amino-acid chain: Urease subunit gamma (100 aa).

This sequence belongs to the urease gamma subunit family. Heterotrimer of UreA (gamma), UreB (beta) and UreC (alpha) subunits. Three heterotrimers associate to form the active enzyme. In terms of processing, although not discussed in the published references, Met-1 is represented in the submitted PDB entries as being modified by either a formyl, a carboxyl, or an acetyl group. The N-terminal is probably N-(dihydroxymethyl)methionine, the hydrated form of N-formylmethionine.

The protein localises to the cytoplasm. The enzyme catalyses urea + 2 H2O + H(+) = hydrogencarbonate + 2 NH4(+). The protein operates within nitrogen metabolism; urea degradation; CO(2) and NH(3) from urea (urease route): step 1/1. The protein is Urease subunit gamma of Sporosarcina pasteurii (Bacillus pasteurii).